The sequence spans 512 residues: 2-isopropylmalate synthase (512 aa).

Residues 4-266 enclose the Pyruvate carboxyltransferase domain; sequence IEIFDTTLRD…TTKLNLKEIA (263 aa). Mn(2+)-binding residues include Asp-13, His-201, His-203, and Asn-237. The tract at residues 390–512 is regulatory domain; sequence QLESVQLAYG…GEPTPVSATI (123 aa).

The protein belongs to the alpha-IPM synthase/homocitrate synthase family. LeuA type 1 subfamily. In terms of assembly, homodimer. Requires Mn(2+) as cofactor.

The protein resides in the cytoplasm. The enzyme catalyses 3-methyl-2-oxobutanoate + acetyl-CoA + H2O = (2S)-2-isopropylmalate + CoA + H(+). It functions in the pathway amino-acid biosynthesis; L-leucine biosynthesis; L-leucine from 3-methyl-2-oxobutanoate: step 1/4. Its function is as follows. Catalyzes the condensation of the acetyl group of acetyl-CoA with 3-methyl-2-oxobutanoate (2-ketoisovalerate) to form 3-carboxy-3-hydroxy-4-methylpentanoate (2-isopropylmalate). The sequence is that of 2-isopropylmalate synthase from Brevibacillus brevis (strain 47 / JCM 6285 / NBRC 100599).